Consider the following 225-residue polypeptide: Peptidyl-tRNA hydrolase (225 aa).

Tyr-14 contacts tRNA. The active-site Proton acceptor is His-19. TRNA contacts are provided by Phe-64, Asn-66, and Asn-112. A disordered region spans residues 187 to 225 (MQPPKPEKPKGEAKPAAPEAPEAAPDTRSALQRLADRFR). Positions 200–210 (KPAAPEAPEAA) are enriched in low complexity.

Belongs to the PTH family. In terms of assembly, monomer.

It is found in the cytoplasm. It carries out the reaction an N-acyl-L-alpha-aminoacyl-tRNA + H2O = an N-acyl-L-amino acid + a tRNA + H(+). Hydrolyzes ribosome-free peptidyl-tRNAs (with 1 or more amino acids incorporated), which drop off the ribosome during protein synthesis, or as a result of ribosome stalling. Functionally, catalyzes the release of premature peptidyl moieties from peptidyl-tRNA molecules trapped in stalled 50S ribosomal subunits, and thus maintains levels of free tRNAs and 50S ribosomes. This chain is Peptidyl-tRNA hydrolase, found in Cereibacter sphaeroides (strain ATCC 17025 / ATH 2.4.3) (Rhodobacter sphaeroides).